The chain runs to 202 residues: Histone H1 (202 aa).

Disordered regions lie at residues 1–50 (MTAI…VTHP) and 114–202 (YKLS…KIAV). A compositionally biased stretch (basic and acidic residues) spans 18 to 38 (EASKVKEQAPATDKKPRAPKE). In terms of domain architecture, H15 spans 48–118 (THPPYFQMIK…KIKASYKLSE (71 aa)). Residues 160–202 (KAKATPKPKKVGAKRTRKSTPAKAKQPKSIKSPAAKRAKKIAV) are compositionally biased toward basic residues.

It belongs to the histone H1/H5 family.

Its subcellular location is the nucleus. The protein localises to the chromosome. In terms of biological role, histones H1 are necessary for the condensation of nucleosome chains into higher-order structures. The chain is Histone H1 from Solanum pennellii (Tomato).